The chain runs to 227 residues: tRNA (guanine-N(7)-)-methyltransferase (227 aa).

S-adenosyl-L-methionine-binding residues include E58, E83, D110, and D132. Residue D132 is part of the active site. Residues K136, D168, and 205–208 (TRFE) contribute to the substrate site.

It belongs to the class I-like SAM-binding methyltransferase superfamily. TrmB family.

It carries out the reaction guanosine(46) in tRNA + S-adenosyl-L-methionine = N(7)-methylguanosine(46) in tRNA + S-adenosyl-L-homocysteine. Its pathway is tRNA modification; N(7)-methylguanine-tRNA biosynthesis. Its function is as follows. Catalyzes the formation of N(7)-methylguanine at position 46 (m7G46) in tRNA. The sequence is that of tRNA (guanine-N(7)-)-methyltransferase from Acidithiobacillus ferrooxidans (strain ATCC 23270 / DSM 14882 / CIP 104768 / NCIMB 8455) (Ferrobacillus ferrooxidans (strain ATCC 23270)).